The sequence spans 168 residues: 6-pyruvoyl tetrahydrobiopterin synthase (168 aa).

Zn(2+) is bound at residue H19. C38 serves as the catalytic Proton acceptor. 2 residues coordinate Zn(2+): H44 and H46. Catalysis depends on charge relay system residues H85 and E130. At S159 the chain carries Phosphoserine. T161 is modified (phosphothreonine). S164, S165, and S167 each carry phosphoserine.

It belongs to the PTPS family. As to quaternary structure, homohexamer formed of two homotrimers in a head to head fashion. The cofactor is Zn(2+).

The enzyme catalyses 7,8-dihydroneopterin 3'-triphosphate = 6-pyruvoyl-5,6,7,8-tetrahydropterin + triphosphate + H(+). The protein operates within cofactor biosynthesis; tetrahydrobiopterin biosynthesis; tetrahydrobiopterin from 7,8-dihydroneopterin triphosphate: step 1/3. Required for pigment and biopterin synthesis. The sequence is that of 6-pyruvoyl tetrahydrobiopterin synthase (pr) from Drosophila melanogaster (Fruit fly).